Reading from the N-terminus, the 300-residue chain is Beta-lactamase (300 aa).

Positions 1-29 (MTMFKTTFRQTATIAVSLISLLVSPMLWA) are cleaved as a signal peptide. Ser75 acts as the Acyl-ester intermediate in catalysis. 239 to 241 (KTG) is a binding site for substrate.

It belongs to the class-A beta-lactamase family. In terms of assembly, monomer.

The catalysed reaction is a beta-lactam + H2O = a substituted beta-amino acid. Its function is as follows. Hydrolyzes broad-spectrum beta-lactam antibiotics. Active against cephalosporins such as cefuroxime and cefotaxime. This chain is Beta-lactamase (blaB), found in Proteus vulgaris.